Consider the following 345-residue polypeptide: tRNA-specific 2-thiouridylase MnmA 1 (345 aa).

Residues 9–16 (GMSGGIDS) and L35 each bind ATP. C96 acts as the Nucleophile in catalysis. A disulfide bridge links C96 with C191. G120 provides a ligand contact to ATP. Residues 138–140 (KDQ) form an interaction with tRNA region. Catalysis depends on C191, which acts as the Cysteine persulfide intermediate. The interval 293-294 (RY) is interaction with tRNA.

It belongs to the MnmA/TRMU family.

The protein localises to the cytoplasm. The catalysed reaction is S-sulfanyl-L-cysteinyl-[protein] + uridine(34) in tRNA + AH2 + ATP = 2-thiouridine(34) in tRNA + L-cysteinyl-[protein] + A + AMP + diphosphate + H(+). Its function is as follows. Catalyzes the 2-thiolation of uridine at the wobble position (U34) of tRNA, leading to the formation of s(2)U34. The chain is tRNA-specific 2-thiouridylase MnmA 1 from Aliarcobacter butzleri (strain RM4018) (Arcobacter butzleri).